The following is a 637-amino-acid chain: Chaperone protein HtpG (637 aa).

Residues M1–R345 are a; substrate-binding. Residues E346–K562 form a b region. The segment at L563–G637 is c.

Belongs to the heat shock protein 90 family. In terms of assembly, homodimer.

It localises to the cytoplasm. Its function is as follows. Molecular chaperone. Has ATPase activity. In Shewanella amazonensis (strain ATCC BAA-1098 / SB2B), this protein is Chaperone protein HtpG.